A 141-amino-acid chain; its full sequence is Large ribosomal subunit protein uL16 (141 aa).

The protein belongs to the universal ribosomal protein uL16 family. In terms of assembly, part of the 50S ribosomal subunit.

In terms of biological role, binds 23S rRNA and is also seen to make contacts with the A and possibly P site tRNAs. The chain is Large ribosomal subunit protein uL16 from Thermus thermophilus (strain ATCC BAA-163 / DSM 7039 / HB27).